Consider the following 85-residue polypeptide: Small muscular protein (85 aa).

The segment at 19–63 is disordered; it reads PMGAFRPGAGQPPRRKESTPGTAEGAPATPEEKKPVPGMKKFPGP. Phosphoserine is present on Ser-36. Thr-47 carries the post-translational modification Phosphothreonine.

This sequence belongs to the SMPX family.

Its function is as follows. Plays a role in the regulatory network through which muscle cells coordinate their structural and functional states during growth, adaptation, and repair. This chain is Small muscular protein (Smpx), found in Rattus norvegicus (Rat).